A 340-amino-acid polypeptide reads, in one-letter code: NADH-quinone oxidoreductase subunit H (340 aa).

9 consecutive transmembrane segments (helical) span residues 9-29 (IWIIIKIVLILVPLLVAVAFI), 81-101 (LIAPILSLVPALAAWAVIPFA), 113-133 (LLFLFAMTSLGVYGILVAGWA), 158-178 (GFALVGVLLAAGTMNLQGIVL), 184-204 (LWHWFWLPLLPLFVTYWITAV), 221-240 (IVAGFHVEYAGVTFALFFLA), 245-264 (MVLVSAIATVIFLGGWLSPF), 273-293 (LFAWVPGIVWFVLKLSLFIFT), and 316-336 (VLIPVTLVWIIILALAIEFHW).

The protein belongs to the complex I subunit 1 family. As to quaternary structure, NDH-1 is composed of 14 different subunits. Subunits NuoA, H, J, K, L, M, N constitute the membrane sector of the complex.

Its subcellular location is the cell inner membrane. The catalysed reaction is a quinone + NADH + 5 H(+)(in) = a quinol + NAD(+) + 4 H(+)(out). Functionally, NDH-1 shuttles electrons from NADH, via FMN and iron-sulfur (Fe-S) centers, to quinones in the respiratory chain. The immediate electron acceptor for the enzyme in this species is believed to be ubiquinone. Couples the redox reaction to proton translocation (for every two electrons transferred, four hydrogen ions are translocated across the cytoplasmic membrane), and thus conserves the redox energy in a proton gradient. This subunit may bind ubiquinone. In Coxiella burnetii (strain CbuK_Q154) (Coxiella burnetii (strain Q154)), this protein is NADH-quinone oxidoreductase subunit H.